A 66-amino-acid chain; its full sequence is MNQGRIWTVVNPGVGLPLLLGSVTVIAILVHYAVLSNTTWFPKYWNGATVAAPAAAPAPAAPAAKK.

Over 1 to 11 (MNQGRIWTVVN) the chain is Cytoplasmic. Residues 12–35 (PGVGLPLLLGSVTVIAILVHYAVL) form a helical membrane-spanning segment. An a bacteriochlorophyll-binding site is contributed by H31. The Periplasmic portion of the chain corresponds to 36-66 (SNTTWFPKYWNGATVAAPAAAPAPAAPAAKK).

This sequence belongs to the antenna complex alpha subunit family. In terms of assembly, the core complex is formed by different alpha and beta chains, binding bacteriochlorophyll molecules, and arranged most probably in tetrameric structures disposed around the reaction center. The non-pigmented gamma chains may constitute additional components.

The protein localises to the cell inner membrane. Functionally, antenna complexes are light-harvesting systems, which transfer the excitation energy to the reaction centers. This is Light-harvesting protein B-800-850 alpha chain B (pucAB) from Rhodopseudomonas palustris (strain ATCC BAA-98 / CGA009).